The chain runs to 434 residues: MEGTAGTITSNEWSSPTSPEGSTASGGSQALDKPIDNDAEGVWSPDIEQSFQEALAIYPPCGRRKIILSDEGKMYGRNELIARYIKLRTGKTRTRKQVSSHIQVLARRKAREIQAKLKDQAAKDKALQSMAAMSSAQIISATAFHSSMALARGPGRPAVSGFWQGALPGQAGTSHDVKPFSQQTYAVQPPLPLPGFESPAGPAPSPSAPPAPPWQGRSVASSKLWMLEFSAFLEQQQDPDTYNKHLFVHIGQSSPSYSDPYLEAVDIRQIYDKFPEKKGGLKDLFERGPSNAFFLVKFWADLNTNIEDEGSSFYGVSSQYESPENMIITCSTKVCSFGKQVVEKVETEYARYENGHYSYRIHRSPLCEYMINFIHKLKHLPEKYMMNSVLENFTILQVVTNRDTQETLLCIAYVFEVSASEHGAQHHIYRLVKE.

Over residues 1–28 the composition is skewed to polar residues; that stretch reads MEGTAGTITSNEWSSPTSPEGSTASGGS. 2 disordered regions span residues 1 to 42 and 188 to 215; these read MEGT…AEGV and QPPLPLPGFESPAGPAPSPSAPPAPPWQ. A DNA-binding region (TEA) is located at residues 36-112; sequence DNDAEGVWSP…QVLARRKARE (77 aa). The segment covering 201–213 has biased composition (pro residues); that stretch reads GPAPSPSAPPAPP.

In terms of assembly, interacts with YAP1 and WWTR1/TAZ. Preferentially expressed in skeletal muscle. Lower levels in pancreas, placenta, and heart.

Its subcellular location is the nucleus. Its function is as follows. Transcription factor which plays a key role in the Hippo signaling pathway, a pathway involved in organ size control and tumor suppression by restricting proliferation and promoting apoptosis. The core of this pathway is composed of a kinase cascade wherein MST1/MST2, in complex with its regulatory protein SAV1, phosphorylates and activates LATS1/2 in complex with its regulatory protein MOB1, which in turn phosphorylates and inactivates YAP1 oncoprotein and WWTR1/TAZ. Acts by mediating gene expression of YAP1 and WWTR1/TAZ, thereby regulating cell proliferation, migration and epithelial mesenchymal transition (EMT) induction. Binds specifically and non-cooperatively to the Sph and GT-IIC 'enhansons' (5'-GTGGAATGT-3') and activates transcription. Binds to the M-CAT motif. The chain is Transcriptional enhancer factor TEF-3 (TEAD4) from Homo sapiens (Human).